The sequence spans 331 residues: Lipoyl synthase (331 aa).

The [4Fe-4S] cluster site is built by Cys60, Cys65, Cys71, Cys86, Cys90, Cys93, and Ser301. Residues 72–290 (WSRGTATFML…REEGMQLGFL (219 aa)) enclose the Radical SAM core domain.

It belongs to the radical SAM superfamily. Lipoyl synthase family. Requires [4Fe-4S] cluster as cofactor.

Its subcellular location is the cytoplasm. The enzyme catalyses [[Fe-S] cluster scaffold protein carrying a second [4Fe-4S](2+) cluster] + N(6)-octanoyl-L-lysyl-[protein] + 2 oxidized [2Fe-2S]-[ferredoxin] + 2 S-adenosyl-L-methionine + 4 H(+) = [[Fe-S] cluster scaffold protein] + N(6)-[(R)-dihydrolipoyl]-L-lysyl-[protein] + 4 Fe(3+) + 2 hydrogen sulfide + 2 5'-deoxyadenosine + 2 L-methionine + 2 reduced [2Fe-2S]-[ferredoxin]. The protein operates within protein modification; protein lipoylation via endogenous pathway; protein N(6)-(lipoyl)lysine from octanoyl-[acyl-carrier-protein]: step 2/2. Its function is as follows. Catalyzes the radical-mediated insertion of two sulfur atoms into the C-6 and C-8 positions of the octanoyl moiety bound to the lipoyl domains of lipoate-dependent enzymes, thereby converting the octanoylated domains into lipoylated derivatives. This chain is Lipoyl synthase, found in Deinococcus radiodurans (strain ATCC 13939 / DSM 20539 / JCM 16871 / CCUG 27074 / LMG 4051 / NBRC 15346 / NCIMB 9279 / VKM B-1422 / R1).